Consider the following 297-residue polypeptide: Bifunctional protein FolD (297 aa).

NADP(+) is bound by residues 168-170 (GRS), T197, and V238.

It belongs to the tetrahydrofolate dehydrogenase/cyclohydrolase family. Homodimer.

It catalyses the reaction (6R)-5,10-methylene-5,6,7,8-tetrahydrofolate + NADP(+) = (6R)-5,10-methenyltetrahydrofolate + NADPH. The enzyme catalyses (6R)-5,10-methenyltetrahydrofolate + H2O = (6R)-10-formyltetrahydrofolate + H(+). It participates in one-carbon metabolism; tetrahydrofolate interconversion. Catalyzes the oxidation of 5,10-methylenetetrahydrofolate to 5,10-methenyltetrahydrofolate and then the hydrolysis of 5,10-methenyltetrahydrofolate to 10-formyltetrahydrofolate. The polypeptide is Bifunctional protein FolD (Lawsonia intracellularis (strain PHE/MN1-00)).